The primary structure comprises 1302 residues: Multidrug resistance protein homolog 65 (1302 aa).

The segment at 1–23 is disordered; sequence MERDEVSTSSSEGKSQEEAPMAE. Residues 1–48 lie on the Cytoplasmic side of the membrane; sequence MERDEVSTSSSEGKSQEEAPMAEGLEPTEPIAFLKLFRFSTYGEIGWL. Residues 48 to 369 enclose the ABC transmembrane type-1 1 domain; it reads LFFGFIMCCI…TAPFLESFAT (322 aa). A helical membrane pass occupies residues 49 to 69; the sequence is FFGFIMCCIKALTLPAVVIIY. At 70–118 the chain is on the extracellular side; sequence SEFTSMLVDRAMQFGTSSNVHALPLFGGGKTLTNASREENNEALYDDSI. An N-linked (GlcNAc...) asparagine glycan is attached at Asn-103. The chain crosses the membrane as a helical span at residues 119-147; the sequence is SYGILLTIASVVMFISGIFSVDVFNMVAL. The Cytoplasmic portion of the chain corresponds to 148-194; the sequence is RQVTRMRIKLFSSVIRQDIGWHDLASKQNFTQSMVDDVEKIRDGISE. A helical membrane pass occupies residues 195-215; sequence KVGHFVYLVVGFIITVAISFS. Residues 216–223 are Extracellular-facing; sequence YGWKLTLA. A helical transmembrane segment spans residues 224–242; that stretch reads VSSYIPLVILLNYYVAKFQ. Residues 243-302 are Cytoplasmic-facing; that stretch reads GKLTAREQESYAGAGNLAEEILSSIRTVVSFGGEKSEVQRYENFLVPARKASQWKGAFSG. The chain crosses the membrane as a helical span at residues 303-323; it reads LSDAVLKSMLYLSCAGAFWYG. Residues 324-341 lie on the Extracellular side of the membrane; that stretch reads VNLIIDDRNVENKEYTPA. Residues 342-362 form a helical membrane-spanning segment; that stretch reads ILMIAFFGIIVGADNIARTAP. The Cytoplasmic segment spans residues 363–731; it reads FLESFATARG…LQLAKQEWCY (369 aa). An ABC transporter 1 domain is found at 405–641; the sequence is VEFQDVFFRY…EGAYYNMVRA (237 aa). Residue 440-447 participates in ATP binding; that stretch reads GSSGCGKS. The chain crosses the membrane as a helical span at residues 732 to 753; it reads LILGTISAVAVGFLYPAFAVIF. Positions 732-1020 constitute an ABC transmembrane type-1 2 domain; it reads LILGTISAVA…SLAFTPAFSA (289 aa). At 754 to 776 the chain is on the extracellular side; the sequence is GEFYAALAEKDPEDALRRTAVLS. A helical transmembrane segment spans residues 777 to 798; that stretch reads WACLGLAFLTGLVCFLQTYLFN. Residues 799–852 are Cytoplasmic-facing; sequence YAGIWLTTRMRAMTFNAMVNQEVGWFDDENNSVGALSARLSGEAVDIQGAIGYP. Residues 853-873 form a helical membrane-spanning segment; sequence LSGMIQALSNFISSVSVAMYY. Residue Asn-874 is a topological domain, extracellular. A helical membrane pass occupies residues 875–894; that stretch reads WKLALLCLANCPIIVGSVIL. Residues 895–956 lie on the Cytoplasmic side of the membrane; that stretch reads EAKMMSNAVV…VEVLIRQKLR (62 aa). A helical transmembrane segment spans residues 957–977; it reads WRGVLNSTMQASAFFAYAVAL. Topologically, residues 978-993 are extracellular; it reads CYGGVLVSEGQLPFQD. Residues 994–1014 form a helical membrane-spanning segment; sequence IIKVSETLLYGSMMLAQSLAF. Over 1015–1302 the chain is Cytoplasmic; sequence TPAFSAALIA…AKLHKTQKDH (288 aa). The ABC transporter 2 domain occupies 1059-1298; that stretch reads VRYRGIQFRY…GGIYAKLHKT (240 aa). 1094–1101 serves as a coordination point for ATP; the sequence is GHSGCGKS.

This sequence belongs to the ABC transporter superfamily. ABCB family. Multidrug resistance exporter (TC 3.A.1.201) subfamily.

The protein localises to the membrane. It catalyses the reaction ATP + H2O + xenobioticSide 1 = ADP + phosphate + xenobioticSide 2.. The chain is Multidrug resistance protein homolog 65 (Mdr65) from Drosophila melanogaster (Fruit fly).